Reading from the N-terminus, the 394-residue chain is HORMA domain-containing protein 1 (394 aa).

Residues 24–226 (HQSLVLVKRL…TPFHIFKVKV (203 aa)) enclose the HORMA domain. Residues 252 to 394 (KILRDKDVED…RKFSEPKEHI (143 aa)) form a disordered region. The segment covering 253 to 282 (ILRDKDVEDEQEHYTSDDLDMETKMEEQEK) has biased composition (basic and acidic residues). Polar residues-rich tracts occupy residues 310–324 (LSIS…VNKT) and 343–352 (KMANGNQPVK). Positions 362–374 (QHESGRRVLHHFD) are enriched in basic and acidic residues. A Phosphoserine modification is found at S376. Residues 383-386 (KRRK) carry the Nuclear localization signal motif.

In terms of assembly, interacts with HORMAD2. Interacts with IHO1. Phosphorylated at Ser-377 in a SPO11-dependent manner.

The protein resides in the nucleus. Its subcellular location is the chromosome. Functionally, plays a key role in meiotic progression. Regulates 3 different functions during meiosis: ensures that sufficient numbers of processed DNA double-strand breaks (DSBs) are available for successful homology search by increasing the steady-state numbers of single-stranded DSB ends. Promotes synaptonemal-complex formation independently of its role in homology search. Plays a key role in the male mid-pachytene checkpoint and the female meiotic prophase checkpoint: required for efficient build-up of ATR activity on unsynapsed chromosome regions, a process believed to form the basis of meiotic silencing of unsynapsed chromatin (MSUC) and meiotic prophase quality control in both sexes. The polypeptide is HORMA domain-containing protein 1 (HORMAD1) (Macaca fascicularis (Crab-eating macaque)).